Here is a 547-residue protein sequence, read N- to C-terminus: Germacrene A synthase (547 aa).

Mg(2+) contacts are provided by Asp-300, Asp-304, Asp-443, and Glu-451. The short motif at 300 to 304 (DDTYD) is the DDXXD motif element.

It belongs to the terpene synthase family. Tpsa subfamily. Mg(2+) serves as cofactor. Requires Mn(2+) as cofactor. In terms of tissue distribution, expressed in leaves.

The protein localises to the plastid. The protein resides in the chloroplast. The catalysed reaction is (2E,6E)-farnesyl diphosphate = germacrene A + diphosphate. The enzyme catalyses (2E,6E)-farnesyl diphosphate = (1S,2S,4R)-beta-elemene + diphosphate. The protein operates within secondary metabolite biosynthesis; terpenoid biosynthesis. Sesquiterpene synthase involved in the biosynthesis of volatile compounds widely used in aromatherapy and folk medicine, and present in culinary herbs. Mediates the conversion of (2E,6E)-farnesyl diphosphate (FPP) into germacrene A and beta-elemene. Not able to use (2E)-geranyl diphosphate (GPP) as substrate. This chain is Germacrene A synthase, found in Lavandula pedunculata subsp. lusitanica (French lavender).